Here is a 130-residue protein sequence, read N- to C-terminus: Phosphoribosyl-AMP cyclohydrolase (130 aa).

A Mg(2+)-binding site is contributed by D77. Residue C78 coordinates Zn(2+). 2 residues coordinate Mg(2+): D79 and D81. Zn(2+) is bound by residues C95 and C102.

Belongs to the PRA-CH family. Homodimer. Requires Mg(2+) as cofactor. Zn(2+) is required as a cofactor.

It localises to the cytoplasm. It catalyses the reaction 1-(5-phospho-beta-D-ribosyl)-5'-AMP + H2O = 1-(5-phospho-beta-D-ribosyl)-5-[(5-phospho-beta-D-ribosylamino)methylideneamino]imidazole-4-carboxamide. Its pathway is amino-acid biosynthesis; L-histidine biosynthesis; L-histidine from 5-phospho-alpha-D-ribose 1-diphosphate: step 3/9. Functionally, catalyzes the hydrolysis of the adenine ring of phosphoribosyl-AMP. This Pseudomonas entomophila (strain L48) protein is Phosphoribosyl-AMP cyclohydrolase.